A 192-amino-acid polypeptide reads, in one-letter code: MGARDCTPLLMLSFLLFPLGFPVLGAPARLICDSRVLERYILEAREAENATMGCAEGCSFNENITVPDTKVNFYAWKRMEVQQQAQEVWQGLALLSEAILRGQALLANASQPCEALRLHVDKAVSGLRSLTSLLRALGAQKEAISLPDATPSAAPLRAFTVDALSKLFRIYSNFLRGKLTLYTGEACRRGDR.

A signal peptide spans 1–25; the sequence is MGARDCTPLLMLSFLLFPLGFPVLG. Intrachain disulfides connect Cys-32–Cys-187 and Cys-54–Cys-58. Asn-49 is a glycosylation site (N-linked (GlcNAc...) asparagine). N-linked (GlcNAc...) asparagine glycans are attached at residues Asn-63 and Asn-108.

This sequence belongs to the EPO/TPO family. Produced by kidney or liver of adult mammals and by liver of fetal or neonatal mammals.

The protein resides in the secreted. Hormone involved in the regulation of erythrocyte proliferation and differentiation and the maintenance of a physiological level of circulating erythrocyte mass. Binds to EPOR leading to EPOR dimerization and JAK2 activation thereby activating specific downstream effectors, including STAT1 and STAT3. This is Erythropoietin (EPO) from Bos mutus grunniens (Wild yak).